Consider the following 512-residue polypeptide: 2-isopropylmalate synthase (512 aa).

The Pyruvate carboxyltransferase domain maps to 5–268 (LIIFDTTLRD…DLGIATQHIL (264 aa)). Mn(2+) is bound by residues D14, H202, H204, and N239. The segment at 394-512 (GFVSLFQQSE…NKADRVAAQG (119 aa)) is regulatory domain.

The protein belongs to the alpha-IPM synthase/homocitrate synthase family. LeuA type 1 subfamily. As to quaternary structure, homodimer. The cofactor is Mn(2+).

The protein localises to the cytoplasm. The enzyme catalyses 3-methyl-2-oxobutanoate + acetyl-CoA + H2O = (2S)-2-isopropylmalate + CoA + H(+). It functions in the pathway amino-acid biosynthesis; L-leucine biosynthesis; L-leucine from 3-methyl-2-oxobutanoate: step 1/4. Catalyzes the condensation of the acetyl group of acetyl-CoA with 3-methyl-2-oxobutanoate (2-ketoisovalerate) to form 3-carboxy-3-hydroxy-4-methylpentanoate (2-isopropylmalate). This chain is 2-isopropylmalate synthase, found in Verminephrobacter eiseniae (strain EF01-2).